The primary structure comprises 495 residues: MQYIKIHALDNVAVALADLAEGTEVSVDNQTVTLRQDVARGHKFALTDIAKGANVIKYGLPIGYALADIAAGVHVHAHNTRTNLSDLDQYRYQPDFQDLPAQAADREVQIYRRANGDVGVRNELWILPTVGCVNGIARQIQNRFLKETNNAEGTDGVFLFSHTYGCSQLGDDHINTRTMLQNMVRHPNAGAVLVIGLGCENNQVAAFRETLGDIDPERVHFMICQQQDDEIEAGIEHLHQLYNVMRNDKREPGKLSELKFGLECGGSDGLSGITANPMLGRFSDYVIANGGTTVLTEVPEMFGAEQLLMDHCRDEATFEKLVTMVNDFKQYFIAHDQPIYENPSPGNKAGGITTLEDKSLGCTQKAGSSVVVDVLRYGERLKTPGLNLLSAPGNDAVATSALAGAGCHMVLFSTGRGTPYGGFVPTVKIATNSELAAKKKHWIDFDAGQLIHGKAMPQLLEEFIDTIVEFANGKQTCNERNDFRELAIFKSGVTL.

Belongs to the UxaA family. Fe(2+) serves as cofactor. Mn(2+) is required as a cofactor.

It carries out the reaction D-altronate = 2-dehydro-3-deoxy-D-gluconate + H2O. The protein operates within carbohydrate metabolism; pentose and glucuronate interconversion. Is inhibited by high concentrations of Fe(2+) (&gt; 2 mM), and by EDTA or other iron chelators in vitro. Its function is as follows. Catalyzes the dehydration of D-altronate. The protein is Altronate dehydratase (uxaA) of Escherichia coli (strain K12).